The primary structure comprises 436 residues: Ribulose bisphosphate carboxylase large chain (436 aa).

Asparagine 104 and threonine 154 together coordinate substrate. Catalysis depends on lysine 156, which acts as the Proton acceptor. Lysine 158 provides a ligand contact to substrate. Lysine 182, aspartate 184, and glutamate 185 together coordinate Mg(2+). N6-carboxylysine is present on lysine 182. The active-site Proton acceptor is histidine 275. Residues arginine 276, histidine 308, and serine 360 each coordinate substrate.

The protein belongs to the RuBisCO large chain family. Type I subfamily. In terms of assembly, heterohexadecamer of 8 large chains and 8 small chains; disulfide-linked. The disulfide link is formed within the large subunit homodimers. It depends on Mg(2+) as a cofactor. In terms of processing, the disulfide bond which can form in the large chain dimeric partners within the hexadecamer appears to be associated with oxidative stress and protein turnover.

It localises to the plastid. It is found in the chloroplast. It catalyses the reaction 2 (2R)-3-phosphoglycerate + 2 H(+) = D-ribulose 1,5-bisphosphate + CO2 + H2O. It carries out the reaction D-ribulose 1,5-bisphosphate + O2 = 2-phosphoglycolate + (2R)-3-phosphoglycerate + 2 H(+). Functionally, ruBisCO catalyzes two reactions: the carboxylation of D-ribulose 1,5-bisphosphate, the primary event in carbon dioxide fixation, as well as the oxidative fragmentation of the pentose substrate in the photorespiration process. Both reactions occur simultaneously and in competition at the same active site. The sequence is that of Ribulose bisphosphate carboxylase large chain from Euglena geniculata.